Consider the following 417-residue polypeptide: F-box protein At3g07870 (417 aa).

One can recognise an F-box domain in the interval 22 to 68 (GGGLESLPEDIIADIFSRLPISSIARLMFVCRSWRSVLTQHGRLSSS).

The sequence is that of F-box protein At3g07870 from Arabidopsis thaliana (Mouse-ear cress).